The chain runs to 201 residues: Xanthine phosphoribosyltransferase (201 aa).

Residues L20 and N27 each contribute to the xanthine site. 5-phospho-alpha-D-ribose 1-diphosphate is bound at residue 129–133 (ANGQA). K157 contacts xanthine.

It belongs to the purine/pyrimidine phosphoribosyltransferase family. Xpt subfamily. As to quaternary structure, homodimer.

The protein localises to the cytoplasm. It carries out the reaction XMP + diphosphate = xanthine + 5-phospho-alpha-D-ribose 1-diphosphate. Its pathway is purine metabolism; XMP biosynthesis via salvage pathway; XMP from xanthine: step 1/1. Converts the preformed base xanthine, a product of nucleic acid breakdown, to xanthosine 5'-monophosphate (XMP), so it can be reused for RNA or DNA synthesis. The polypeptide is Xanthine phosphoribosyltransferase (Shouchella clausii (strain KSM-K16) (Alkalihalobacillus clausii)).